The primary structure comprises 442 residues: 23S rRNA (uracil(1939)-C(5))-methyltransferase RlmD (442 aa).

A TRAM domain is found at 12–70 (SKQLSAKVTLEVTKLDHLGAGMAQHQGKIVFIPGALPNEKVTVQLTEQKKRHARAKLLK). Cysteine 83, cysteine 89, cysteine 92, and cysteine 171 together coordinate [4Fe-4S] cluster. 6 residues coordinate S-adenosyl-L-methionine: glutamine 276, phenylalanine 305, asparagine 310, glutamate 326, aspartate 353, and aspartate 373. The active-site Nucleophile is the cysteine 399.

This sequence belongs to the class I-like SAM-binding methyltransferase superfamily. RNA M5U methyltransferase family. RlmD subfamily.

It carries out the reaction uridine(1939) in 23S rRNA + S-adenosyl-L-methionine = 5-methyluridine(1939) in 23S rRNA + S-adenosyl-L-homocysteine + H(+). Its function is as follows. Catalyzes the formation of 5-methyl-uridine at position 1939 (m5U1939) in 23S rRNA. The polypeptide is 23S rRNA (uracil(1939)-C(5))-methyltransferase RlmD (Shewanella sediminis (strain HAW-EB3)).